Here is a 227-residue protein sequence, read N- to C-terminus: Cytochrome c oxidase subunit 2 (227 aa).

The Mitochondrial intermembrane portion of the chain corresponds to 1–14 (MAHPMQLGFQDAAS). A helical membrane pass occupies residues 15 to 45 (PIMEELLYFHDHTLMIVFMISSLVLYIISLM). Topologically, residues 46-59 (LSTELTHTSTMDAQ) are mitochondrial matrix. A helical transmembrane segment spans residues 60 to 87 (EVETVWTILPAVILILIALPSLRILYMM). Topologically, residues 88 to 227 (DEINTPSMTL…YFEEWLLKSL (140 aa)) are mitochondrial intermembrane. The Cu cation site is built by histidine 161, cysteine 196, glutamate 198, cysteine 200, histidine 204, and methionine 207. Glutamate 198 serves as a coordination point for Mg(2+). At tyrosine 218 the chain carries Phosphotyrosine.

This sequence belongs to the cytochrome c oxidase subunit 2 family. As to quaternary structure, component of the cytochrome c oxidase (complex IV, CIV), a multisubunit enzyme composed of 14 subunits. The complex is composed of a catalytic core of 3 subunits MT-CO1, MT-CO2 and MT-CO3, encoded in the mitochondrial DNA, and 11 supernumerary subunits COX4I, COX5A, COX5B, COX6A, COX6B, COX6C, COX7A, COX7B, COX7C, COX8 and NDUFA4, which are encoded in the nuclear genome. The complex exists as a monomer or a dimer and forms supercomplexes (SCs) in the inner mitochondrial membrane with NADH-ubiquinone oxidoreductase (complex I, CI) and ubiquinol-cytochrome c oxidoreductase (cytochrome b-c1 complex, complex III, CIII), resulting in different assemblies (supercomplex SCI(1)III(2)IV(1) and megacomplex MCI(2)III(2)IV(2)). Found in a complex with TMEM177, COA6, COX18, COX20, SCO1 and SCO2. Interacts with TMEM177 in a COX20-dependent manner. Interacts with COX20. Interacts with COX16. Cu cation is required as a cofactor.

It localises to the mitochondrion inner membrane. It catalyses the reaction 4 Fe(II)-[cytochrome c] + O2 + 8 H(+)(in) = 4 Fe(III)-[cytochrome c] + 2 H2O + 4 H(+)(out). In terms of biological role, component of the cytochrome c oxidase, the last enzyme in the mitochondrial electron transport chain which drives oxidative phosphorylation. The respiratory chain contains 3 multisubunit complexes succinate dehydrogenase (complex II, CII), ubiquinol-cytochrome c oxidoreductase (cytochrome b-c1 complex, complex III, CIII) and cytochrome c oxidase (complex IV, CIV), that cooperate to transfer electrons derived from NADH and succinate to molecular oxygen, creating an electrochemical gradient over the inner membrane that drives transmembrane transport and the ATP synthase. Cytochrome c oxidase is the component of the respiratory chain that catalyzes the reduction of oxygen to water. Electrons originating from reduced cytochrome c in the intermembrane space (IMS) are transferred via the dinuclear copper A center (CU(A)) of subunit 2 and heme A of subunit 1 to the active site in subunit 1, a binuclear center (BNC) formed by heme A3 and copper B (CU(B)). The BNC reduces molecular oxygen to 2 water molecules using 4 electrons from cytochrome c in the IMS and 4 protons from the mitochondrial matrix. This is Cytochrome c oxidase subunit 2 (MT-CO2) from Nycticebus coucang (Slow loris).